We begin with the raw amino-acid sequence, 133 residues long: MHEYSIACEIFEQVIETAKVHGALEVRHVTLEMGRLSHTNPEQLSFCFKAIAEGSIAENAEFIVETIPPSLECECGYTGTVDETQIGKNDELQSELLEYIAALECPVCGKNARIIGGRELIVKSIEIETEVEQ.

His2 is a Ni(2+) binding site. The Zn(2+) site is built by Cys73, Cys75, Cys105, and Cys108.

It belongs to the HypA/HybF family.

Functionally, involved in the maturation of [NiFe] hydrogenases. Required for nickel insertion into the metal center of the hydrogenase. The polypeptide is Hydrogenase maturation factor HypA (Methanosarcina acetivorans (strain ATCC 35395 / DSM 2834 / JCM 12185 / C2A)).